The following is a 428-amino-acid chain: Chaperone SurA (428 aa).

The first 20 residues, 1-20 (MKNWKTLLLGIAMIANTSFA), serve as a signal peptide directing secretion. PpiC domains are found at residues 171–272 (STEL…KVND) and 282–382 (VTEV…ELLD).

It localises to the periplasm. It catalyses the reaction [protein]-peptidylproline (omega=180) = [protein]-peptidylproline (omega=0). In terms of biological role, chaperone involved in the correct folding and assembly of outer membrane proteins. Recognizes specific patterns of aromatic residues and the orientation of their side chains, which are found more frequently in integral outer membrane proteins. May act in both early periplasmic and late outer membrane-associated steps of protein maturation. The sequence is that of Chaperone SurA from Escherichia coli O157:H7.